Reading from the N-terminus, the 224-residue chain is Ribulose-phosphate 3-epimerase (224 aa).

Residue serine 8 coordinates substrate. Positions 31, 33, and 64 each coordinate a divalent metal cation. Aspartate 33 (proton acceptor) is an active-site residue. Substrate is bound by residues histidine 64, 140–143 (GFGG), 173–175 (DGG), and 195–196 (GS). Residue aspartate 173 participates in a divalent metal cation binding. The active-site Proton donor is aspartate 173.

It belongs to the ribulose-phosphate 3-epimerase family. A divalent metal cation is required as a cofactor.

It catalyses the reaction D-ribulose 5-phosphate = D-xylulose 5-phosphate. Its pathway is carbohydrate degradation. Catalyzes the reversible epimerization of D-ribulose 5-phosphate to D-xylulose 5-phosphate. The sequence is that of Ribulose-phosphate 3-epimerase from Mycobacterium leprae (strain TN).